We begin with the raw amino-acid sequence, 315 residues long: MSDSLRIIFAGTPDFAARHLDALLSSGHEVVGVFTQPDRPAGRGNKLTPSPVKVLAEQHNIPIFQPKSLRPAENQAMVQALDADVMVVVAYGLILPQPVLSMPRLGCINVHGSLLPLWRGAAPIQRALWAGDSETGVTIMQMDVGLDTGAMLHKISCPILPQDTSATLYDKLAELGPRGLLETLELLADGSAVAEAQNDALATYAEKLSKEEARLNWQLSAEQLERCIRAFNPWPVSYFTVDEQPVKVWKAEVITTAHSTLPGTILQADKQGIQVATAVGILNIQELQPAGKKVMSAQDLLNSRREWFVPGNTLD.

A (6S)-5,6,7,8-tetrahydrofolate-binding site is contributed by 113–116 (SLLP).

This sequence belongs to the Fmt family.

It carries out the reaction L-methionyl-tRNA(fMet) + (6R)-10-formyltetrahydrofolate = N-formyl-L-methionyl-tRNA(fMet) + (6S)-5,6,7,8-tetrahydrofolate + H(+). Its function is as follows. Attaches a formyl group to the free amino group of methionyl-tRNA(fMet). The formyl group appears to play a dual role in the initiator identity of N-formylmethionyl-tRNA by promoting its recognition by IF2 and preventing the misappropriation of this tRNA by the elongation apparatus. In Pectobacterium carotovorum subsp. carotovorum (strain PC1), this protein is Methionyl-tRNA formyltransferase.